Here is a 154-residue protein sequence, read N- to C-terminus: Large ribosomal subunit protein uL23z (154 aa).

It belongs to the universal ribosomal protein uL23 family.

Functionally, binds to a specific region on the 26S rRNA. This is Large ribosomal subunit protein uL23z (RPL23AA) from Arabidopsis thaliana (Mouse-ear cress).